Consider the following 72-residue polypeptide: UPF0729 protein C18orf32 homolog (72 aa).

Residues 1 to 33 (MVCIPCIVIPVLLWIFKKFLEPYIYPVVSRIWP) form a necessary for its localzation to the endoplasmic reticulum and lipid droplets region. The interval 36–72 (AVQQSGDKNMSKVDCKGAGTNGLPTKGPTEVSDKKKD) is disordered.

Belongs to the UPF0729 family. As to quaternary structure, interacts with DERL1 and AMFR. In terms of processing, undergoes ER-associated degradation (ERAD).

Its subcellular location is the endoplasmic reticulum. The protein resides in the lipid droplet. In terms of biological role, may activate the NF-kappa-B signaling pathway. This Mus musculus (Mouse) protein is UPF0729 protein C18orf32 homolog.